The sequence spans 585 residues: Archaeosine synthase (585 aa).

Residues 516–584 form the PUA domain; it reads TKTVEIDGFV…IGVEIRHVEE (69 aa).

The protein belongs to the archaeosine synthase type 1 family. As to quaternary structure, homodimer.

It carries out the reaction 7-cyano-7-carbaguanosine(15) in tRNA + L-glutamine + H2O = archaeosine(15) in tRNA + L-glutamate. The protein operates within tRNA modification; archaeosine-tRNA biosynthesis. In terms of biological role, is responsible for the final step in the biosynthesis of archaeosine, a modified nucleoside present in the dihydrouridine loop (D-loop) of archaeal tRNA. Catalyzes the conversion of 7-cyano-7-deazaguanine (preQ0)-modified tRNA to archaeosine-tRNA, transforming a nitrile group to a formamidine group. This is Archaeosine synthase from Haloferax volcanii (strain ATCC 29605 / DSM 3757 / JCM 8879 / NBRC 14742 / NCIMB 2012 / VKM B-1768 / DS2) (Halobacterium volcanii).